Reading from the N-terminus, the 209-residue chain is PF03932 family protein CutC (209 aa).

The protein belongs to the CutC family.

The protein resides in the cytoplasm. Functionally, might participate in the control of copper homeostasis; data from other bacteria suggests it is not involved. The sequence is that of PF03932 family protein CutC from Enterococcus faecalis (strain ATCC 700802 / V583).